The chain runs to 185 residues: Ribosome maturation factor RimM (185 aa).

One can recognise a PRC barrel domain in the interval 108–183 (PGEFHVTDLL…RLEIKTIPGL (76 aa)).

Belongs to the RimM family. In terms of assembly, binds ribosomal protein uS19.

It is found in the cytoplasm. Functionally, an accessory protein needed during the final step in the assembly of 30S ribosomal subunit, possibly for assembly of the head region. Essential for efficient processing of 16S rRNA. May be needed both before and after RbfA during the maturation of 16S rRNA. It has affinity for free ribosomal 30S subunits but not for 70S ribosomes. The chain is Ribosome maturation factor RimM from Synechocystis sp. (strain ATCC 27184 / PCC 6803 / Kazusa).